The chain runs to 246 residues: Small ribosomal subunit protein uS2 (246 aa).

The protein belongs to the universal ribosomal protein uS2 family.

The sequence is that of Small ribosomal subunit protein uS2 from Dictyoglomus thermophilum (strain ATCC 35947 / DSM 3960 / H-6-12).